Consider the following 286-residue polypeptide: ATP synthase gamma chain (286 aa).

It belongs to the ATPase gamma chain family. F-type ATPases have 2 components, CF(1) - the catalytic core - and CF(0) - the membrane proton channel. CF(1) has five subunits: alpha(3), beta(3), gamma(1), delta(1), epsilon(1). CF(0) has three main subunits: a, b and c.

The protein resides in the cell membrane. Functionally, produces ATP from ADP in the presence of a proton gradient across the membrane. The gamma chain is believed to be important in regulating ATPase activity and the flow of protons through the CF(0) complex. In Ureaplasma parvum serovar 3 (strain ATCC 27815 / 27 / NCTC 11736), this protein is ATP synthase gamma chain.